The primary structure comprises 427 residues: MNNLEIFEESKKYMPGGVNSPVRCFKEMGMNPPVIKSGKGVIIKDEDGKEYIDFVLAWGPLLLGHCDEDVVKAIKETSENALAFGAPTKLELELSKFMCENLDNVDMIRMVNSGTEATMSAVKLARGYTGKSKIVKFAGCYHGHFDGFLIEAGSGVLTEGIPGSLGVPKESVENTLIGLYNDKTQIKELFKKQGNEIAAVIIEPVAGNMGVIKANEDFIKELRSLCDEYGALLIFDEVMTGFRVAFKGAQTLFDIKPDLITYAKIMGGGLPCGAYAGKKEIMEKLSPCGGVYQAGTMSGNPVVMSAGLATLTKLKNNIELYDHVEKIGEKLQEGLIKISKENDVPLIINRVGGMLTLFFTELEKVNTYEDVKTCDNERFKRYFKHMLNEGFNIAPSQFEAMFLSVKHTEEHIDKFLDAFKRFAINEK.

Lys-264 is modified (N6-(pyridoxal phosphate)lysine).

It belongs to the class-III pyridoxal-phosphate-dependent aminotransferase family. HemL subfamily. As to quaternary structure, homodimer. It depends on pyridoxal 5'-phosphate as a cofactor.

It localises to the cytoplasm. The enzyme catalyses (S)-4-amino-5-oxopentanoate = 5-aminolevulinate. The protein operates within porphyrin-containing compound metabolism; protoporphyrin-IX biosynthesis; 5-aminolevulinate from L-glutamyl-tRNA(Glu): step 2/2. This Clostridium botulinum (strain Eklund 17B / Type B) protein is Glutamate-1-semialdehyde 2,1-aminomutase.